A 160-amino-acid chain; its full sequence is Phosphopantetheine adenylyltransferase (160 aa).

A substrate-binding site is contributed by serine 10. ATP is bound by residues 10 to 11 (SF) and histidine 18. Lysine 42, threonine 74, and arginine 88 together coordinate substrate. ATP contacts are provided by residues 89–91 (GLR), glutamate 99, and 124–130 (YSFVSST).

It belongs to the bacterial CoaD family. In terms of assembly, homohexamer. Requires Mg(2+) as cofactor.

It localises to the cytoplasm. The catalysed reaction is (R)-4'-phosphopantetheine + ATP + H(+) = 3'-dephospho-CoA + diphosphate. It participates in cofactor biosynthesis; coenzyme A biosynthesis; CoA from (R)-pantothenate: step 4/5. In terms of biological role, reversibly transfers an adenylyl group from ATP to 4'-phosphopantetheine, yielding dephospho-CoA (dPCoA) and pyrophosphate. In Leptospira biflexa serovar Patoc (strain Patoc 1 / Ames), this protein is Phosphopantetheine adenylyltransferase.